Reading from the N-terminus, the 65-residue chain is MGNIRTSFVKRLAKELIETHKGVFTTDFDQNKKLVMEYSTVSTKHLRNKIAGYVTRLVRLEQTQE.

It belongs to the eukaryotic ribosomal protein eS17 family.

The sequence is that of Small ribosomal subunit protein eS17 from Methanobrevibacter smithii (strain ATCC 35061 / DSM 861 / OCM 144 / PS).